The primary structure comprises 362 residues: Protein MGF 360-18R (362 aa).

This sequence belongs to the asfivirus MGF 360 family.

Its function is as follows. Plays a role in virus cell tropism, and may be required for efficient virus replication in macrophages. The chain is Protein MGF 360-18R from African swine fever virus (isolate Warthog/Namibia/Wart80/1980) (ASFV).